The primary structure comprises 128 residues: uncharacterized protein (128 aa).

This is an uncharacterized protein from Caenorhabditis elegans.